A 92-amino-acid chain; its full sequence is MPKLEMMLLVLLIFPLSYFIAAGGQVVQVDRRGDGLAGYLQRGDRDVQDCQVSTPGSKWGRCCLNRVCGPMCCPASHCYCVYHRGRGHGCSC.

The first 24 residues, 1–24 (MPKLEMMLLVLLIFPLSYFIAAGG), serve as a signal peptide directing secretion. The propeptide occupies 25-45 (QVVQVDRRGDGLAGYLQRGDR). Residues Pro-55, Pro-70, and Pro-74 each carry the 4-hydroxyproline; partial modification. Intrachain disulfides connect Cys-63/Cys-72, Cys-68/Cys-80, Cys-73/Cys-90, and Cys-78/Cys-92.

This sequence belongs to the conotoxin D superfamily. As to quaternary structure, homodimer or pseudo-homodimer. Three dimers exist: homodimer of VxXXA, pseudo-homodimer of both VxXXA and [hydroxyPro-74]VxXXA and homodimer of [hydroxyPro-74]VxXXA. These three components exist in a 1:2:1 ratio. In terms of processing, vxXXA stands for the form with the Pro-55 hydroxylated. A second major form has both Pro-55 and Pro-74 hydroxylated. The two major forms VxXXA and [hydroxyPro-74]VxXXA exist in a 1:1 ratio. Post-translationally, minor forms are [hydroxyPro-70,hydroxyPro-74]VxXXA and [Pro-55]VxXXA. In terms of tissue distribution, expressed by the venom duct.

The protein localises to the secreted. Alpha-conotoxins act on postsynaptic membranes, they bind to the nicotinic acetylcholine receptors (nAChR) and thus inhibit them. Through its two C-terminal domains, this homodimeric protein would bind to two nAChR allosteric sites, located outside the nAChR C-loop of the principal binding face and at the adjacent binding interface in a clockwise direction. This toxin specifically blocks mammalian neuronal nAChR of the alpha-7/CHRNA7, alpha-3-beta-2/CHRNA3-CHRNB2 (IC(50)=370 nM) and alpha-4-beta-2/CHRNA4-CHRNB2 subtypes. VxXXB inhibits alpha-7/CHRNA7 and alpha-3-beta-2/CHRNA3-CHRNB2 nAChR subtypes with the highest efficiency, followed by VxXXA and VxXXC. VxXXB and VxXXC inhibit the alpha-4-beta-2/CHRNA4-CHRNB2 nAChR subtype more efficiently than VxXXA. The protein is Alpha-conotoxin VxXXA of Conus vexillum (Flag cone).